The primary structure comprises 886 residues: Alanine--tRNA ligase (886 aa).

4 residues coordinate Zn(2+): histidine 564, histidine 568, cysteine 676, and histidine 680.

It belongs to the class-II aminoacyl-tRNA synthetase family. The cofactor is Zn(2+).

The protein localises to the cytoplasm. It carries out the reaction tRNA(Ala) + L-alanine + ATP = L-alanyl-tRNA(Ala) + AMP + diphosphate. In terms of biological role, catalyzes the attachment of alanine to tRNA(Ala) in a two-step reaction: alanine is first activated by ATP to form Ala-AMP and then transferred to the acceptor end of tRNA(Ala). Also edits incorrectly charged Ser-tRNA(Ala) and Gly-tRNA(Ala) via its editing domain. This Bartonella bacilliformis protein is Alanine--tRNA ligase.